The chain runs to 346 residues: Protease inhibitor Egf1.5b (346 aa).

The N-terminal stretch at 1-28 is a signal peptide; it reads MYIDTGIMSNNIFLFAFFALVGLTRIEA. A TIL domain is found at 52–104; sequence CRENEHYNSTRIECEDECNDRNNKLCYRFQQFCWCNEGYIRNSSHICVKLEDC.

This sequence belongs to the polydnaviridae EGF-like motif protein family. As to quaternary structure, interacts with host PAP1, PAP3 and SPH2.

Functionally, counteracts the host humoral immune response by inhibiting the processing and the amidolytic activity of host PAP1 and PAP3. Thereby, melanization of host hemolymph, normally producing several reactive intermediates toxic for viruses, is deregulated and proper immune response cannot occur. In Microplitis demolitor (Parasitoid wasp), this protein is Protease inhibitor Egf1.5b (O5).